The primary structure comprises 71 residues: Cold shock-like protein CspB (71 aa).

One can recognise a CSD domain in the interval 7-67; sequence GLVKWFNADK…GAKGPAAANV (61 aa).

It is found in the cytoplasm. This chain is Cold shock-like protein CspB (cspB), found in Escherichia coli (strain K12).